The chain runs to 101 residues: Replication restart protein PriB (101 aa).

Positions 1 to 101 constitute an SSB domain; it reads MTTNNLVLAG…LHAENVELKT (101 aa).

The protein belongs to the PriB family. As to quaternary structure, homodimer. Interacts with PriA and DnaT. Component of the replication restart primosome. Primosome assembly occurs via a 'hand-off' mechanism. PriA binds to replication forks, subsequently PriB then DnaT bind; DnaT then displaces ssDNA to generate the helicase loading substrate.

Functionally, involved in the restart of stalled replication forks, which reloads the replicative helicase on sites other than the origin of replication; the PriA-PriB pathway is the major replication restart pathway. During primosome assembly it facilitates complex formation between PriA and DnaT on DNA; stabilizes PriA on DNA. Stimulates the DNA unwinding activity of PriA helicase. This chain is Replication restart protein PriB, found in Shewanella piezotolerans (strain WP3 / JCM 13877).